Here is a 333-residue protein sequence, read N- to C-terminus: tRNA N6-adenosine threonylcarbamoyltransferase (333 aa).

Fe cation-binding residues include His-111 and His-115. Residues 134-138 (LVSGG), Asp-167, Gly-180, and Asn-272 each bind substrate. Asp-300 is a Fe cation binding site.

Belongs to the KAE1 / TsaD family. The cofactor is Fe(2+).

Its subcellular location is the cytoplasm. It carries out the reaction L-threonylcarbamoyladenylate + adenosine(37) in tRNA = N(6)-L-threonylcarbamoyladenosine(37) in tRNA + AMP + H(+). Functionally, required for the formation of a threonylcarbamoyl group on adenosine at position 37 (t(6)A37) in tRNAs that read codons beginning with adenine. Is involved in the transfer of the threonylcarbamoyl moiety of threonylcarbamoyl-AMP (TC-AMP) to the N6 group of A37, together with TsaE and TsaB. TsaD likely plays a direct catalytic role in this reaction. This is tRNA N6-adenosine threonylcarbamoyltransferase from Legionella pneumophila (strain Lens).